Reading from the N-terminus, the 504-residue chain is DnaJ homolog subfamily C member 3 (504 aa).

Positions 1 to 31 (MVAPGSVTSRLGSVFPFLLVLVDLQYEGAEC) are cleaved as a signal peptide. TPR repeat units follow at residues 37-70 (VEKH…DPDN), 72-104 (IAYY…KMDF), 105-138 (TAAR…NPSE), 154-187 (MQRL…CVWD), 189-221 (ELRE…KNDN), 222-255 (TEAF…DQDH), 268-301 (LNKL…EPGV), 306-339 (IRSK…EPDN), and 340-373 (VNAL…NEND). An intrachain disulfide couples C248 to C258. A Phosphoserine modification is found at S274. C313 and C329 form a disulfide bridge. The segment at 375-393 (QIREGLEKAQRLLKQSQRR) is flexible linker. Residues 394–462 (DYYKILGVKR…EMRKKFDDGE (69 aa)) enclose the J domain. A disordered region spans residues 451–481 (DPEMRKKFDDGEDPLDAESQQGGGGNPFHRS).

As to quaternary structure, interacts with EIF2AK4/GCN2; this interaction occurs under endoplasmic reticulum (ER) stress, hypothermic and amino acid starving stress conditions and inhibits EIF2AK4/GCN2 kinase activity. Interacts with EIF2AK3. Interacts with EIF2AK2. Forms a trimeric complex with DNAJB1 and HSPA8. Interacts with THAP12.

The protein localises to the endoplasmic reticulum. Involved in the unfolded protein response (UPR) during endoplasmic reticulum (ER) stress. Acts as a negative regulator of the EIF2AK4/GCN2 kinase activity by preventing the phosphorylation of eIF-2-alpha at 'Ser-52' and hence attenuating general protein synthesis under ER stress, hypothermic and amino acid starving stress conditions. Co-chaperone of HSPA8/HSC70, it stimulates its ATPase activity. May inhibit both the autophosphorylation of EIF2AK2/PKR and the ability of EIF2AK2 to catalyze phosphorylation of the EIF2A. May inhibit EIF2AK3/PERK activity. This chain is DnaJ homolog subfamily C member 3 (DNAJC3), found in Bos taurus (Bovine).